A 329-amino-acid chain; its full sequence is Glyceraldehyde-3-phosphate dehydrogenase 1 (329 aa).

NAD(+)-binding positions include 11 to 12, D33, and E77; that span reads RI. S148 bears the Phosphoserine mark. 148-150 provides a ligand contact to D-glyceraldehyde 3-phosphate; it reads SCT. C149 acts as the Nucleophile in catalysis. S177 is subject to Phosphoserine. A D-glyceraldehyde 3-phosphate-binding site is contributed by T179. The residue at position 200 (S200) is a Phosphoserine. D-glyceraldehyde 3-phosphate is bound by residues 208–209 and R231; that span reads TG. An NAD(+)-binding site is contributed by N313.

Belongs to the glyceraldehyde-3-phosphate dehydrogenase family. As to quaternary structure, homotetramer.

The protein localises to the cytoplasm. The enzyme catalyses D-glyceraldehyde 3-phosphate + phosphate + NAD(+) = (2R)-3-phospho-glyceroyl phosphate + NADH + H(+). It participates in carbohydrate degradation; glycolysis; pyruvate from D-glyceraldehyde 3-phosphate: step 1/5. The sequence is that of Glyceraldehyde-3-phosphate dehydrogenase 1 from Kluyveromyces marxianus (Yeast).